The following is a 439-amino-acid chain: Dihydroorotase (439 aa).

Positions 65 and 67 each coordinate Zn(2+). Substrate-binding positions include 67–69 and N99; that span reads HFR. 4 residues coordinate Zn(2+): D156, H183, H246, and D321. D321 is an active-site residue. Substrate is bound by residues H325 and 339–340; that span reads FG.

It belongs to the metallo-dependent hydrolases superfamily. DHOase family. Class I DHOase subfamily. Zn(2+) is required as a cofactor.

The enzyme catalyses (S)-dihydroorotate + H2O = N-carbamoyl-L-aspartate + H(+). It functions in the pathway pyrimidine metabolism; UMP biosynthesis via de novo pathway; (S)-dihydroorotate from bicarbonate: step 3/3. Catalyzes the reversible cyclization of carbamoyl aspartate to dihydroorotate. This chain is Dihydroorotase, found in Chlorobaculum tepidum (strain ATCC 49652 / DSM 12025 / NBRC 103806 / TLS) (Chlorobium tepidum).